A 348-amino-acid polypeptide reads, in one-letter code: UDP-3-O-acylglucosamine N-acyltransferase (348 aa).

The active-site Proton acceptor is histidine 237.

This sequence belongs to the transferase hexapeptide repeat family. LpxD subfamily. Homotrimer.

It carries out the reaction a UDP-3-O-[(3R)-3-hydroxyacyl]-alpha-D-glucosamine + a (3R)-hydroxyacyl-[ACP] = a UDP-2-N,3-O-bis[(3R)-3-hydroxyacyl]-alpha-D-glucosamine + holo-[ACP] + H(+). It participates in bacterial outer membrane biogenesis; LPS lipid A biosynthesis. Catalyzes the N-acylation of UDP-3-O-acylglucosamine using 3-hydroxyacyl-ACP as the acyl donor. Is involved in the biosynthesis of lipid A, a phosphorylated glycolipid that anchors the lipopolysaccharide to the outer membrane of the cell. This chain is UDP-3-O-acylglucosamine N-acyltransferase, found in Geotalea daltonii (strain DSM 22248 / JCM 15807 / FRC-32) (Geobacter daltonii).